The chain runs to 182 residues: Adenine phosphoribosyltransferase (182 aa).

It belongs to the purine/pyrimidine phosphoribosyltransferase family. In terms of assembly, homodimer.

The protein resides in the cytoplasm. The enzyme catalyses AMP + diphosphate = 5-phospho-alpha-D-ribose 1-diphosphate + adenine. Its pathway is purine metabolism; AMP biosynthesis via salvage pathway; AMP from adenine: step 1/1. In terms of biological role, catalyzes a salvage reaction resulting in the formation of AMP, that is energically less costly than de novo synthesis. The protein is Adenine phosphoribosyltransferase of Pseudomonas putida (strain GB-1).